Consider the following 285-residue polypeptide: MNIVIALIPAVMWGIMPLVVSKIGGKPRQQIIGTTFGALAFAIGVFIFTNPEYTATIIIASFVSGAFWSLGQMNQFRAFTQVGVSKTMPLSTGMQLVGTSLFGVFAFHEWGTTSKLVLGFSALALIIIGIFLTSYQQHKDENSGQNMKKGIITLLISSVGYVGYVVITRWFDISGWDAILPQAIGMVVAGLLFSIKSEEKRFTKQTWLNMIPGVMWATGNLALLFSNKLVGIATGFSLSQMGVVISTIGGILFLGEKKTKKELILVIIGVVLVIIGGTMIGIAKS.

The next 10 helical transmembrane spans lie at 5 to 24 (IALI…SKIG), 31 to 48 (IIGT…VFIF), 53 to 71 (YTAT…WSLG), 84 to 106 (VSKT…GVFA), 116 to 135 (LVLG…LTSY), 151 to 173 (IITL…WFDI), 178 to 195 (AILP…LFSI), 207 to 226 (WLNM…LLFS), 232 to 254 (IATG…ILFL), and 263 to 282 (LILV…MIGI).

Belongs to the GRP transporter (TC 2.A.7.5) family.

Its subcellular location is the cell membrane. The sequence is that of Putative sugar uptake protein lmo0169 from Listeria monocytogenes serovar 1/2a (strain ATCC BAA-679 / EGD-e).